We begin with the raw amino-acid sequence, 199 residues long: V-set and transmembrane domain-containing protein 5 (199 aa).

The signal sequence occupies residues 1–27 (MRPPRCVGRTQGIPLGLLAFWVATARC). The Extracellular segment spans residues 28–146 (LQSQGVSLYI…VSEIRYEDLH (119 aa)). The Ig-like C2-type domain occupies 36-138 (YIPRSAINAT…QSGTILLHVS (103 aa)). N-linked (GlcNAc...) asparagine glycans are attached at residues Asn43, Asn87, and Asn101. Residues 147–167 (FVAVFFALLAAVAVVLISLMW) form a helical membrane-spanning segment. Topologically, residues 168 to 199 (VCNQCAYKFQRKRRYKLRESTTEEIEMKDVEC) are cytoplasmic. The interval 169 to 185 (CNQCAYKFQRKRRYKLR) is important for CDC42-dependent filopodia induction.

Can homooligomerize through cis interactions within the same cell membrane. Post-translationally, N-glycosylated.

It is found in the cell membrane. It localises to the cell projection. The protein localises to the dendrite. Its subcellular location is the axon. Functionally, cell adhesion-like membrane protein of the central nervous system (CNS) which modulates both the position and complexity of central neurons by altering their membrane morphology and dynamics. Involved in the formation of neuronal dendrites and protrusions including dendritic filopodia. In synaptogenesis, regulates synapse formation by altering dendritic spine morphology and actin distribution. Promotes formation of unstable neuronal spines such as thin and branched types. Regulates neuronal morphogenesis and migration during cortical development in the brain. The sequence is that of V-set and transmembrane domain-containing protein 5 (Vstm5) from Rattus norvegicus (Rat).